We begin with the raw amino-acid sequence, 255 residues long: F-box/SPRY domain-containing protein 1 (255 aa).

Residues 3 to 51 (DPVAALCNYNVLEVIFSYLELDDLSHCSQVCKSWNLFLNDENSDVWRWH) enclose the F-box domain. The region spanning 61-253 (LKSDLLSSVS…VSMVYLGTPM (193 aa)) is the B30.2/SPRY domain.

Belongs to the FBXO45/Fsn family. As to quaternary structure, component of an E3 ubiquitin ligase complex composed of hiw and Fsn.

The protein resides in the synapse. It functions in the pathway protein modification; protein ubiquitination. Functionally, required in the presynaptic motoneuron to down-regulate the levels of wnd and restrain synaptic terminal growth at the neuromuscular junction (NMJ). The sequence is that of F-box/SPRY domain-containing protein 1 from Drosophila ananassae (Fruit fly).